The chain runs to 330 residues: Inositol 2-dehydrogenase (330 aa).

Belongs to the Gfo/Idh/MocA family.

It carries out the reaction myo-inositol + NAD(+) = scyllo-inosose + NADH + H(+). The protein operates within polyol metabolism; myo-inositol degradation into acetyl-CoA; acetyl-CoA from myo-inositol: step 1/7. Its function is as follows. Involved in the oxidation of myo-inositol (MI) to 2-keto-myo-inositol (2KMI or 2-inosose). In Rhizobium meliloti (strain 1021) (Ensifer meliloti), this protein is Inositol 2-dehydrogenase (idhA).